The following is a 103-amino-acid chain: Small ribosomal subunit protein uS10 (103 aa).

Belongs to the universal ribosomal protein uS10 family. As to quaternary structure, part of the 30S ribosomal subunit.

Functionally, involved in the binding of tRNA to the ribosomes. This is Small ribosomal subunit protein uS10 from Clostridioides difficile (strain 630) (Peptoclostridium difficile).